Consider the following 343-residue polypeptide: 2-deoxy-scyllo-inosamine dehydrogenase (343 aa).

Zn(2+)-binding residues include Cys37, His59, Cys91, Cys94, Cys97, Cys105, and Glu146.

It belongs to the zinc-containing alcohol dehydrogenase family. DOIA dehydrogenase subfamily. Zn(2+) is required as a cofactor.

It carries out the reaction 2-deoxy-scyllo-inosamine + NADP(+) = 3-amino-2,3-dideoxy-scyllo-inosose + NADPH + H(+). It catalyses the reaction 2-deoxy-scyllo-inosamine + NAD(+) = 3-amino-2,3-dideoxy-scyllo-inosose + NADH + H(+). The protein operates within metabolic intermediate biosynthesis; 2-deoxystreptamine biosynthesis; 2-deoxystreptamine from D-glucose 6-phosphate: step 3/4. It functions in the pathway antibiotic biosynthesis; kanamycin biosynthesis. In terms of biological role, catalyzes the oxidation of 2-deoxy-scyllo-inosamine (DOIA) with NAD(+) or NADP(+), forming 3-amino-2,3-dideoxy-scyllo-inosose (amino-DOI). In Streptomyces kanamyceticus, this protein is 2-deoxy-scyllo-inosamine dehydrogenase (kanE).